The chain runs to 154 residues: Secreted RxLR effector protein PITG_21681 (154 aa).

The signal sequence occupies residues 1-20 (MRRYAALMVIDAVLLSTSQA). Residues 42-70 (SAERDGGIPNKRSLRRISVTESNDGERDE) are disordered. The short motif at 53–72 (RSLRRISVTESNDGERDEER) is the RxLR-dEER element.

The protein belongs to the RxLR effector family.

It is found in the secreted. Its subcellular location is the host cell. In terms of biological role, secreted effector that is involved in host plant infection. Increases the susceptibility to P.infestans and reduces the plant growth. Affects the expression of host genes. This chain is Secreted RxLR effector protein PITG_21681, found in Phytophthora infestans (strain T30-4) (Potato late blight agent).